The chain runs to 354 residues: Lariat debranching enzyme (354 aa).

Residues Cys14, His16, and Asp45 each contribute to the a divalent metal cation site. RNA is bound by residues Lys59, Asn90, His91, Lys134, and His156. Residue Asn90 participates in a divalent metal cation binding. The lariat recognition loop stretch occupies residues 130-158; it reads SGIYKSFDEKKPYTYPPSPNDVVSLFHTR. His180 serves as a coordination point for a divalent metal cation. Gly201, Asp205, His230, Met231, and His232 together coordinate RNA. His230 is an a divalent metal cation binding site. An a divalent metal cation-binding site is contributed by His232.

It belongs to the lariat debranching enzyme family. The cofactor is Fe(2+). It depends on Zn(2+) as a cofactor. Requires Mn(2+) as cofactor.

The protein localises to the cytoplasm. Its subcellular location is the perinuclear region. Active in presence of diverse metals including Fe(2+), Zn(2+) and Mn(2+). Binds two metal cations in two adjacent alpha and beta metal-binding pockets. The activity is the highest with Fe(2+) bound to the 2 metal-binding sites. The activity is slightly lower with Fe(2+) bound to the beta site and Zn(2+) to the alpha site and decreases further when only Zn(2+) is bound. No activity with Mn(2+). However, another study showed activity with Mn(2+) bound to the beta site and Zn(2+) to the alpha site. Mn(2+) appears unable to bind to the alpha site. Cleaves the 2'-5' phosphodiester linkage at the branch point of excised lariat intron RNA and converts them into linear molecules that can be subsequently degraded, thereby facilitating ribonucleotide turnover. This chain is Lariat debranching enzyme, found in Entamoeba histolytica (strain ATCC 30459 / HM-1:IMSS / ABRM).